The primary structure comprises 1088 residues: RNA-directed RNA polymerase (1088 aa).

A RdRp catalytic domain is found at 501–687; it reads LSYGDVTRFL…AKRYIAGGKI (187 aa).

It belongs to the reoviridae RNA-directed RNA polymerase family. Interacts with VP3 (Potential). Interacts with VP2; this interaction activates VP1. Interacts with NSP5; this interaction is probably necessary for the formation of functional virus factories. Interacts with NSP2; this interaction is weak. Requires Mg(2+) as cofactor.

Its subcellular location is the virion. The enzyme catalyses RNA(n) + a ribonucleoside 5'-triphosphate = RNA(n+1) + diphosphate. RNA-directed RNA polymerase that is involved in both transcription and genome replication. Together with VP3 capping enzyme, forms an enzyme complex positioned near the channels situated at each of the five-fold vertices of the core. Following infection, the outermost layer of the virus is lost, leaving a double-layered particle (DLP) made up of the core and VP6 shell. VP1 then catalyzes the transcription of fully conservative plus-strand genomic RNAs that are extruded through the DLP's channels into the cytoplasm where they function as mRNAs for translation of viral proteins. One copy of each of the viral (+)RNAs is also recruited during core assembly, together with newly synthesized polymerase complexes and VP2. The polymerase of these novo-formed particles catalyzes the synthesis of complementary minus-strands leading to dsRNA formation. To do so, the polymerase specifically recognizes and binds 4 bases 5'-UGUG-3' in the conserved 3'-sequence of plus-strand RNA templates. VP2 presumably activates the autoinhibited VP1-RNA complex to coordinate packaging and genome replication. Once dsRNA synthesis is complete, the polymerase switches to the transcriptional mode, thus providing secondary transcription. This is RNA-directed RNA polymerase from Homo sapiens (Human).